A 174-amino-acid polypeptide reads, in one-letter code: Rubredoxin-2 (174 aa).

The Rubredoxin-like 1 domain occupies methionine 1–isoleucine 53. Fe cation is bound by residues cysteine 6, cysteine 9, cysteine 39, and cysteine 42. Over residues glycine 56 to alanine 65 the composition is skewed to low complexity. The interval glycine 56–threonine 115 is disordered. A compositionally biased stretch (basic residues) spans alanine 97–lysine 109. Residues phenylalanine 121 to histidine 172 form the Rubredoxin-like 2 domain. The Fe cation site is built by cysteine 126, cysteine 129, cysteine 159, and cysteine 162.

Belongs to the rubredoxin family. Requires Fe(3+) as cofactor.

It localises to the cytoplasm. It participates in hydrocarbon metabolism; alkane degradation. Involved in the hydrocarbon hydroxylating system, which transfers electrons from NADH to rubredoxin reductase and then through rubredoxin to alkane 1 monooxygenase. The chain is Rubredoxin-2 (alkG) from Alcanivorax borkumensis (strain ATCC 700651 / DSM 11573 / NCIMB 13689 / SK2).